The sequence spans 859 residues: Transforming growth factor-beta receptor-associated protein 1 (859 aa).

In terms of domain architecture, CNH spans 24–297 (RGLLECVECC…HILQDFEGRV (274 aa)). Residues 563–727 (KRPLDEQQSG…LLAVYLGPGP (165 aa)) form a CHCR repeat.

Belongs to the TRAP1 family. In terms of assembly, interacts with TGFBR2 and ACVR2B; in the absence of ligand stimulation. Interacts with TGFBR1, ACVRL1, BMPR1A and ACVR1B; in the absence of ligand stimulation and to a less extent. Interacts with SMAD4; the interaction seems to be mutually exclusive with the interaction of SMAD4 and phosphorylated SMAD2. May interact with ALOX5. Interacts with RAB5C. Interacts with VPS8, VPS11 and VPS16. Component of the putative class C core vacuole/endosome tethering (CORVET) complex; the core of which composed of the class C Vps proteins VPS11, VPS16, VPS18 and VPS33A, is associated with VPS8 and TGFBRAP1.

The protein resides in the cytoplasm. It localises to the early endosome. Its function is as follows. Plays a role in the TGF-beta/activin signaling pathway. It associates with inactive heteromeric TGF-beta and activin receptor complexes, mainly through the type II receptor, and is released upon activation of signaling. May recruit SMAD4 to the vicinity of the receptor complex and facilitate its interaction with receptor-regulated Smads, such as SMAD2. In terms of biological role, plays a role in vesicle-mediated protein trafficking of the endocytic membrane transport pathway. Believed to act as a component of the putative CORVET endosomal tethering complexes which is proposed to be involved in the Rab5-to-Rab7 endosome conversion probably implicating MON1A/B, and via binding SNAREs and SNARE complexes to mediate tethering and docking events during SNARE-mediated membrane fusion. The CORVET complex is proposed to function as a Rab5 effector to mediate early endosome fusion probably in specific endosome subpopulations. Functions predominantly in APPL1-containing endosomes and in degradative but not recycling trafficking of endocytosed cargo. The sequence is that of Transforming growth factor-beta receptor-associated protein 1 (TGFBRAP1) from Bos taurus (Bovine).